The chain runs to 295 residues: Ribosomal protein L11 methyltransferase (295 aa).

S-adenosyl-L-methionine is bound by residues Thr-146, Gly-167, Asp-189, and Asn-231.

This sequence belongs to the methyltransferase superfamily. PrmA family.

It is found in the cytoplasm. The enzyme catalyses L-lysyl-[protein] + 3 S-adenosyl-L-methionine = N(6),N(6),N(6)-trimethyl-L-lysyl-[protein] + 3 S-adenosyl-L-homocysteine + 3 H(+). Functionally, methylates ribosomal protein L11. The sequence is that of Ribosomal protein L11 methyltransferase from Vibrio vulnificus (strain CMCP6).